Reading from the N-terminus, the 444-residue chain is Probable glycine dehydrogenase (decarboxylating) subunit 1 (444 aa).

Belongs to the GcvP family. N-terminal subunit subfamily. In terms of assembly, the glycine cleavage system is composed of four proteins: P, T, L and H. In this organism, the P 'protein' is a heterodimer of two subunits.

It catalyses the reaction N(6)-[(R)-lipoyl]-L-lysyl-[glycine-cleavage complex H protein] + glycine + H(+) = N(6)-[(R)-S(8)-aminomethyldihydrolipoyl]-L-lysyl-[glycine-cleavage complex H protein] + CO2. The glycine cleavage system catalyzes the degradation of glycine. The P protein binds the alpha-amino group of glycine through its pyridoxal phosphate cofactor; CO(2) is released and the remaining methylamine moiety is then transferred to the lipoamide cofactor of the H protein. This chain is Probable glycine dehydrogenase (decarboxylating) subunit 1, found in Chlorobaculum parvum (strain DSM 263 / NCIMB 8327) (Chlorobium vibrioforme subsp. thiosulfatophilum).